Consider the following 117-residue polypeptide: MPRVKTGTVRRQRHKKVLKLARGFYSGRRKHFRKAKEQLERSMYYAFRDRKQKKRDFRSLWITRINAACRINEISYSRFMHGLKLANIELDRKILADMAMNEPANFAKIVEAAKKAL.

This sequence belongs to the bacterial ribosomal protein bL20 family.

In terms of biological role, binds directly to 23S ribosomal RNA and is necessary for the in vitro assembly process of the 50S ribosomal subunit. It is not involved in the protein synthesizing functions of that subunit. The chain is Large ribosomal subunit protein bL20 from Wolinella succinogenes (strain ATCC 29543 / DSM 1740 / CCUG 13145 / JCM 31913 / LMG 7466 / NCTC 11488 / FDC 602W) (Vibrio succinogenes).